A 117-amino-acid chain; its full sequence is Immunoglobulin lambda variable 2 (117 aa).

The N-terminal stretch at 1 to 19 (MAWTSLILSLLALCSGASS) is a signal peptide. A Pyrrolidone carboxylic acid modification is found at Gln-20. An Ig-like domain is found at 20-117 (QAVVTQESAL…FCALWYSTHF (98 aa)).

This is Immunoglobulin lambda variable 2 from Mus musculus (Mouse).